The following is a 352-amino-acid chain: Organic solute transporter subunit alpha (352 aa).

At 1–45 (MDVAHPEEVTRFSPDILMEKFNVSEACFLPPPISIQLILQLTWLD) the chain is on the extracellular side. N-linked (GlcNAc...) asparagine glycosylation occurs at Asn22. A helical transmembrane segment spans residues 46 to 66 (IGVFAALTAMTVLTIAIYLEI). Topologically, residues 67 to 82 (VCYLMDKVKCPIKRKT) are cytoplasmic. The chain crosses the membrane as a helical span at residues 83–103 (LMWNSAAPTVIAITSCLGLWV). At 104–108 (PRAIM) the chain is on the extracellular side. A helical transmembrane segment spans residues 109 to 129 (FVDMAAAMYFGVGFYLMLLII). Over 130–173 (VQGYGGEEAMLQHLATHTIRISTGPCCCCCPCLPHIHLTRQKYK) the chain is Cytoplasmic. Residues 174–194 (IFVLGAFQVAFLRPALFLLGV) traverse the membrane as a helical segment. The Extracellular segment spans residues 195–210 (VLWTNGLYDPDDWSST). A helical transmembrane segment spans residues 211 to 231 (SIFLWLNLFLGVSTILGLWPV). Residues 232 to 250 (NVLFRHSKVLMADQKLTCK) are Cytoplasmic-facing. A helical membrane pass occupies residues 251–271 (FALFQAILILSSLQNSIIGTL). Residues 272–294 (AGAGHIGCAPPYSARTRGQQMNN) lie on the Extracellular side of the membrane. The helical transmembrane segment at 295–312 (QLLIIEMFFVGILTRISY) threads the bilayer. Residues 313–352 (RKRDDRPGHRHVGEVQQIVRECDQPAIADQQADHSSISHI) are Cytoplasmic-facing.

The protein belongs to the OST-alpha family. As to quaternary structure, interacts with slc51b. The Ost-alpha/Ost-beta complex is a heterodimer composed of alpha (slc51a) and beta (slc51b) subunit. In terms of tissue distribution, expressed in liver.

It localises to the cell membrane. Its subcellular location is the endoplasmic reticulum membrane. It catalyses the reaction taurocholate(out) = taurocholate(in). The enzyme catalyses prostaglandin E2(out) = prostaglandin E2(in). It carries out the reaction estrone 3-sulfate(out) = estrone 3-sulfate(in). The catalysed reaction is dehydroepiandrosterone 3-sulfate(out) = dehydroepiandrosterone 3-sulfate(in). It catalyses the reaction tauroursodeoxycholate(out) = tauroursodeoxycholate(in). The enzyme catalyses glycoursodeoxycholate(out) = glycoursodeoxycholate(in). It carries out the reaction glycocholate(out) = glycocholate(in). The catalysed reaction is taurochenodeoxycholate(out) = taurochenodeoxycholate(in). It catalyses the reaction glycochenodeoxycholate(out) = glycochenodeoxycholate(in). The enzyme catalyses taurodeoxycholate(out) = taurodeoxycholate(in). It carries out the reaction glycodeoxycholate(out) = glycodeoxycholate(in). Essential component of the Ost-alpha/Ost-beta complex, a heterodimer that acts as the intestinal basolateral transporter responsible for the translocation of bile acids (such as taurocholate), steroids (such as estrone sulfate), and eicosanoids (such as prostaglandin E2). The protein is Organic solute transporter subunit alpha (slc51a) of Leucoraja erinaceus (Little skate).